The following is a 592-amino-acid chain: NADH-quinone oxidoreductase subunit C/D (592 aa).

Residues methionine 1 to glutamine 183 are NADH dehydrogenase I subunit C. Residues aspartate 207 to arginine 592 are NADH dehydrogenase I subunit D.

The protein in the N-terminal section; belongs to the complex I 30 kDa subunit family. This sequence in the C-terminal section; belongs to the complex I 49 kDa subunit family. As to quaternary structure, NDH-1 is composed of 13 different subunits. Subunits NuoB, CD, E, F, and G constitute the peripheral sector of the complex.

It is found in the cell inner membrane. It carries out the reaction a quinone + NADH + 5 H(+)(in) = a quinol + NAD(+) + 4 H(+)(out). NDH-1 shuttles electrons from NADH, via FMN and iron-sulfur (Fe-S) centers, to quinones in the respiratory chain. The immediate electron acceptor for the enzyme in this species is believed to be ubiquinone. Couples the redox reaction to proton translocation (for every two electrons transferred, four hydrogen ions are translocated across the cytoplasmic membrane), and thus conserves the redox energy in a proton gradient. This is NADH-quinone oxidoreductase subunit C/D from Chromohalobacter salexigens (strain ATCC BAA-138 / DSM 3043 / CIP 106854 / NCIMB 13768 / 1H11).